Consider the following 485-residue polypeptide: tRNA sulfurtransferase (485 aa).

One can recognise a THUMP domain in the interval E61–R165. ATP-binding positions include L183 to I184, K265, G287, and Q296. C344 and C456 are disulfide-bonded. Residues L404–N483 form the Rhodanese domain. Residue C456 is the Cysteine persulfide intermediate of the active site.

It belongs to the ThiI family.

The protein localises to the cytoplasm. The catalysed reaction is [ThiI sulfur-carrier protein]-S-sulfanyl-L-cysteine + a uridine in tRNA + 2 reduced [2Fe-2S]-[ferredoxin] + ATP + H(+) = [ThiI sulfur-carrier protein]-L-cysteine + a 4-thiouridine in tRNA + 2 oxidized [2Fe-2S]-[ferredoxin] + AMP + diphosphate. It catalyses the reaction [ThiS sulfur-carrier protein]-C-terminal Gly-Gly-AMP + S-sulfanyl-L-cysteinyl-[cysteine desulfurase] + AH2 = [ThiS sulfur-carrier protein]-C-terminal-Gly-aminoethanethioate + L-cysteinyl-[cysteine desulfurase] + A + AMP + 2 H(+). Its pathway is cofactor biosynthesis; thiamine diphosphate biosynthesis. Functionally, catalyzes the ATP-dependent transfer of a sulfur to tRNA to produce 4-thiouridine in position 8 of tRNAs, which functions as a near-UV photosensor. Also catalyzes the transfer of sulfur to the sulfur carrier protein ThiS, forming ThiS-thiocarboxylate. This is a step in the synthesis of thiazole, in the thiamine biosynthesis pathway. The sulfur is donated as persulfide by IscS. The chain is tRNA sulfurtransferase from Haemophilus influenzae (strain PittGG).